Reading from the N-terminus, the 457-residue chain is Vasoactive intestinal polypeptide receptor (457 aa).

The first 19 residues, 1 to 19, serve as a signal peptide directing secretion; it reads MGLVEVVWWWRWRFGGGGG. Over 20–141 the chain is Extracellular; that stretch reads GLVVEVEVWW…KEQTAFYGTV (122 aa). Disulfide bonds link Cys-51/Cys-73, Cys-64/Cys-105, and Cys-87/Cys-122. N-linked (GlcNAc...) asparagine glycans are attached at residues Asn-59, Asn-70, Asn-100, and Asn-104. A helical membrane pass occupies residues 142–166; it reads KTGYTIGHTLSLIALTAAMIILCLF. Topologically, residues 167–173 are cytoplasmic; that stretch reads RKLHCTR. A helical membrane pass occupies residues 174–193; sequence NYIHMHLFMSFIMRAIAVFI. Residues 194-215 are Extracellular-facing; sequence KDVTLFESGEPEHCFVSSVGCK. Cys-214 and Cys-284 form a disulfide bridge. A helical transmembrane segment spans residues 216–239; sequence AMMVFFQYCVMANFFWLLVEGLYL. The Cytoplasmic segment spans residues 240-253; it reads HTLLVISFFSERKY. A helical membrane pass occupies residues 254–275; the sequence is FWWYILIGWGAPSVFITAWTVV. Topologically, residues 276–292 are extracellular; that stretch reads RIYFFNVGCWEEIIESP. A helical membrane pass occupies residues 293–316; sequence IWWIIKTPILVSILVNFILFICII. The Cytoplasmic segment spans residues 317–341; the sequence is RILVQKLHSPDVGHNETSQYSRLAK. The chain crosses the membrane as a helical span at residues 342–361; that stretch reads STLLLIPLFGIHYIMFAFFP. Residues 362 to 373 lie on the Extracellular side of the membrane; sequence DNFKAQVKLVFE. Residues 374 to 393 form a helical membrane-spanning segment; it reads LVVGSFQGFVVAVLYCFLNG. The Cytoplasmic portion of the chain corresponds to 394-457; it reads EVQAELKRKW…SSFQAEFSLV (64 aa).

The protein belongs to the G-protein coupled receptor 2 family. In terms of tissue distribution, expressed in pituitary, hypothalamus, small intestine and ovarian follicles.

It localises to the cell membrane. This is a receptor for VIP. The activity of this receptor is mediated by G proteins which activate adenylyl cyclase. This Meleagris gallopavo (Wild turkey) protein is Vasoactive intestinal polypeptide receptor (VIPR1).